Consider the following 157-residue polypeptide: Transcription elongation factor GreA (157 aa).

A compositionally biased stretch (basic and acidic residues) spans Glu25 to Leu43. The tract at residues Glu25–Ala47 is disordered. Residues Leu43–Asp79 are a coiled coil.

Belongs to the GreA/GreB family.

In terms of biological role, necessary for efficient RNA polymerase transcription elongation past template-encoded arresting sites. The arresting sites in DNA have the property of trapping a certain fraction of elongating RNA polymerases that pass through, resulting in locked ternary complexes. Cleavage of the nascent transcript by cleavage factors such as GreA or GreB allows the resumption of elongation from the new 3'terminus. GreA releases sequences of 2 to 3 nucleotides. The sequence is that of Transcription elongation factor GreA from Amoebophilus asiaticus (strain 5a2).